Reading from the N-terminus, the 54-residue chain is UPF0391 membrane protein msr3702 (54 aa).

The next 2 helical transmembrane spans lie at 4 to 24 (WALVFLVVAIIAGALGFGGIA) and 30 to 50 (IAQILFFIFLAFLVISLLAGL).

It belongs to the UPF0391 family.

The protein resides in the cell membrane. This is UPF0391 membrane protein msr3702 from Mesorhizobium japonicum (strain LMG 29417 / CECT 9101 / MAFF 303099) (Mesorhizobium loti (strain MAFF 303099)).